The chain runs to 345 residues: Acetylserotonin O-methyltransferase (345 aa).

S-adenosyl-L-methionine contacts are provided by residues Tyr-147, Trp-164, Asp-210, 235–237, and Arg-252; that span reads GDF. Residue His-255 is the Proton donor/acceptor of the active site. Substrate contacts are provided by Asp-256, Asn-302, and Gln-306.

Belongs to the class I-like SAM-binding methyltransferase superfamily. Cation-independent O-methyltransferase family. As to quaternary structure, homodimer. As to expression, expressed in the pineal gland (at protein level). Not detectable in retina, nor in liver.

It catalyses the reaction N-acetylserotonin + S-adenosyl-L-methionine = melatonin + S-adenosyl-L-homocysteine + H(+). Its pathway is aromatic compound metabolism; melatonin biosynthesis; melatonin from serotonin: step 1/2. Its function is as follows. Catalyzes the transfer of a methyl group onto N-acetylserotonin, producing melatonin (N-acetyl-5-methoxytryptamine). In Bos taurus (Bovine), this protein is Acetylserotonin O-methyltransferase (ASMT).